The sequence spans 140 residues: MADGRPAALDDFCRRFDISFFDLHLTCIFCSHTVDLQDLASFYLKKLSLVFRGGCYYACCSECLRLSARFEQENYFQCSIKAVNLEEVAQRKIKEICIRCICCLRLLDIVEKLDLLYSDQACYLIRGLWRGYCRNCIRKQ.

Zinc fingers lie at residues 27 to 63 and 100 to 136; these read CIFC…CSEC and CICC…CRNC.

This sequence belongs to the papillomaviridae E6 protein family. Forms homodimers. Interacts with ubiquitin-protein ligase UBE3A/E6-AP; this interaction stimulates UBE3A ubiquitin activity. Interacts with host BAK1.

It localises to the host cytoplasm. The protein localises to the host nucleus. Plays a major role in the induction and maintenance of cellular transformation. E6 associates with host UBE3A/E6-AP ubiquitin-protein ligase and modulates its activity. Protects host keratinocytes from apoptosis by mediating the degradation of host BAK1. May also inhibit host immune response. The protein is Protein E6 of Human papillomavirus 65.